The chain runs to 882 residues: Alanine--tRNA ligase (882 aa).

Zn(2+) is bound by residues His-574, His-578, Cys-682, and His-686. The interval 853 to 882 (GGRGGGKGALAQGGGLDPRKAREALPGLLP) is disordered. A compositionally biased stretch (gly residues) spans 854 to 868 (GRGGGKGALAQGGGL).

Belongs to the class-II aminoacyl-tRNA synthetase family. The cofactor is Zn(2+).

Its subcellular location is the cytoplasm. The catalysed reaction is tRNA(Ala) + L-alanine + ATP = L-alanyl-tRNA(Ala) + AMP + diphosphate. In terms of biological role, catalyzes the attachment of alanine to tRNA(Ala) in a two-step reaction: alanine is first activated by ATP to form Ala-AMP and then transferred to the acceptor end of tRNA(Ala). Also edits incorrectly charged Ser-tRNA(Ala) and Gly-tRNA(Ala) via its editing domain. The sequence is that of Alanine--tRNA ligase from Thermus thermophilus (strain ATCC 27634 / DSM 579 / HB8).